The following is a 277-amino-acid chain: MKKEEKINYFWKYVLLTVGGILILIPLMVTVFSSFKKTKDIMNHFFAFPNPITLDNYKRLLADGVGGYFWNSTVITVLSVLVVMLFIPAAAYSIARNMSRRKAFNIMYSLLILGIFVPFQVIMIPITVMMSKLGLANMWGLIILYLTYAIPQTLFLYVGYIKLSVPDSLDEAAEIDGADKLTTYRKIIFPMLKPMHATTLIINALWFWNDFMLPLLILNKDSSMWTLPLFQYNYSGQYFNDYGPSFASYIVGIITITIVYLIFQKHIIAGMSNGAVK.

A run of 6 helical transmembrane segments spans residues Y13–S33, V74–I94, L110–M130, L141–I161, T198–L218, and G243–F263. One can recognise an ABC transmembrane type-1 domain in the interval F69–F263.

It belongs to the binding-protein-dependent transport system permease family. MalFG subfamily.

The protein localises to the cell membrane. Involved in a binding protein-dependent transport system responsible for the uptake of melibiose, raffinose and isomaltotriose. The sequence is that of Multiple sugar-binding transport system permease protein MsmG (msmG) from Streptococcus mutans serotype c (strain ATCC 700610 / UA159).